The following is a 249-amino-acid chain: Putative [LysW]-aminoadipate/[LysW]-glutamate kinase (249 aa).

Residues arginine 64 and asparagine 166 each coordinate substrate.

It belongs to the acetylglutamate kinase family. LysZ subfamily.

Its subcellular location is the cytoplasm. It catalyses the reaction [amino-group carrier protein]-C-terminal-N-(1,4-dicarboxybutan-1-yl)-L-glutamine + ATP = [amino-group carrier protein]-C-terminal-N-(1-carboxy-5-phosphooxy-5-oxopentan-1-yl)-L-glutamine + ADP. It carries out the reaction [amino-group carrier protein]-C-terminal-gamma-(L-glutamyl)-L-glutamate + ATP = [amino-group carrier protein]-C-terminal-gamma-(5-phospho-L-glutamyl)-L-glutamate + ADP. The protein operates within amino-acid biosynthesis; L-lysine biosynthesis via AAA pathway; L-lysine from L-alpha-aminoadipate (Thermus route): step 2/5. It functions in the pathway amino-acid biosynthesis; L-arginine biosynthesis. Its function is as follows. Involved in both the arginine and lysine biosynthetic pathways. Phosphorylates the LysW-bound precursors glutamate (for arginine biosynthesis), respectively alpha-aminoadipate (for lysine biosynthesis). This is Putative [LysW]-aminoadipate/[LysW]-glutamate kinase from Pyrococcus horikoshii (strain ATCC 700860 / DSM 12428 / JCM 9974 / NBRC 100139 / OT-3).